The following is a 402-amino-acid chain: Zinc finger protein 322 (402 aa).

The C2H2-type 1; atypical zinc finger occupies 43–65; that stretch reads YQCLECKQNFCENLALIMCERTH. C2H2-type zinc fingers lie at residues 71 to 93, 99 to 121, 127 to 149, 155 to 177, 183 to 205, 211 to 233, 239 to 261, and 267 to 289; these read YKCDMCEKTFVQSSDLISHQRIH, YKCSKCEKSFWHHLALSGHQRTH, YTCDICGKNFGQSSDLLVHQRSH, YLCSECDKCFSRSTNLIRHRRTH, FKCLECEKAFSGKSDLISHQRTH, YKCNKCEKSYRHRSAFIVHKRVH, YKCGACEKCFGQKSDLIVHQRVH, and YKCLECMRSFTRSANLIRHQATH. The C2H2-type 10; degenerate zinc-finger motif lies at 293–315; the sequence is FKCLEYEKSFNCSSDLIVHQRIH. Residues 351 to 373 form a C2H2-type 11; degenerate zinc finger; it reads YKYTVCDKSFHQSSALLQHQTVH. Phosphoserine is present on serine 391.

The protein belongs to the krueppel C2H2-type zinc-finger protein family. As to quaternary structure, interacts with POU5F1.

It is found in the cytoplasm. The protein localises to the nucleus. In terms of biological role, transcriptional activator. Important for maintenance of pluripotency in embryonic stem cells. Binds directly to the POU5F1 distal enhancer and the NANOG proximal promoter, and enhances expression of both genes. Can also bind to numerous other gene promoters and regulates expression of many other pluripotency factors, either directly or indirectly. Promotes inhibition of MAPK signaling during embryonic stem cell differentiation. This chain is Zinc finger protein 322 (ZNF322), found in Macaca fascicularis (Crab-eating macaque).